A 422-amino-acid chain; its full sequence is MAKKIQAIRGMNDCLPTQSPLWQKLENAVKSTVSAYGYNEVRMPIVEETNLFSRAVGEETDVVSKEMYTFDDRNGDSLTLRPEGTAGCVRACIQNSLINRDEQRLWYMGPMFRHERPQKGRYRQFHQCGVEVFGLNGPDVDAELIMMTARLWRELGINEHVRLELNSIGSQEDRADYRTALVAFLEQHIDVLDEDCKRRMHTNPLRVLDTKNPEVQAILGDAPRLSEYLGEESKAHFAGLCELLDAAGIEYTVNERLVRGLDYYNRTVFEWITESLGAQGTVCGGGRYDGLVEQLGGSATPAVGFAMGLERLVLMLETLELTDVRRSVDVYVVTAGEGTMMVGMKLAEQLREAIPGVRVMSHFGGGNFKKQFKRADKVGAVVALVLGENEVAENTVVLKDLVGGEQETYNQAEVAEKIAALI.

The protein belongs to the class-II aminoacyl-tRNA synthetase family. As to quaternary structure, homodimer.

The protein resides in the cytoplasm. It carries out the reaction tRNA(His) + L-histidine + ATP = L-histidyl-tRNA(His) + AMP + diphosphate + H(+). The polypeptide is Histidine--tRNA ligase (Vibrio campbellii (strain ATCC BAA-1116)).